We begin with the raw amino-acid sequence, 277 residues long: Small ribosomal subunit protein uS2 (277 aa).

A disordered region spans residues glycine 226–alanine 277. The segment covering alanine 239–valine 257 has biased composition (low complexity).

This sequence belongs to the universal ribosomal protein uS2 family.

This chain is Small ribosomal subunit protein uS2, found in Sphingopyxis alaskensis (strain DSM 13593 / LMG 18877 / RB2256) (Sphingomonas alaskensis).